The primary structure comprises 696 residues: Elongation factor G (696 aa).

Positions T10–L290 constitute a tr-type G domain. GTP is bound by residues A19–T26, D89–H93, and N143–D146.

The protein belongs to the TRAFAC class translation factor GTPase superfamily. Classic translation factor GTPase family. EF-G/EF-2 subfamily.

The protein localises to the cytoplasm. Catalyzes the GTP-dependent ribosomal translocation step during translation elongation. During this step, the ribosome changes from the pre-translocational (PRE) to the post-translocational (POST) state as the newly formed A-site-bound peptidyl-tRNA and P-site-bound deacylated tRNA move to the P and E sites, respectively. Catalyzes the coordinated movement of the two tRNA molecules, the mRNA and conformational changes in the ribosome. This Deinococcus geothermalis (strain DSM 11300 / CIP 105573 / AG-3a) protein is Elongation factor G.